We begin with the raw amino-acid sequence, 39 residues long: Potassium channel toxin alpha-KTx 2.2 (39 aa).

Disulfide bonds link Cys-7–Cys-29, Cys-13–Cys-34, and Cys-17–Cys-36. Residues 37–39 (YPH) are interaction with Kv1.3 channels.

It belongs to the short scorpion toxin superfamily. Potassium channel inhibitor family. Alpha-KTx 02 subfamily. As to expression, expressed by the venom gland.

The protein localises to the secreted. Functionally, potent inhibitor of voltage-gated potassium channels such as Kv1.1/KCNA1 (IC(50)=0.144 nM), Kv1.2/KCNA2 (IC(50)=0.675 nM), Kv1.3/KCNA3 (IC(50)=0.23 nM) and Shaker (Kd=160 nM). Suppresses expression of the Kv1.3/KCNA3 channel in lipopolysaccharide (LPS)-stimulated mouse macrophages. Down-regulates secretion of nitric oxide (NO) and inflammatory cytokines, such as TNF-alpha/TNF, IL-1beta/IL1B and IL6, in LPS-stimulated mouse macrophages in a manner dependent on Kv1.3/KCNA3 channel blockage. Reduces activation of MAPK and NF-kappa-B signaling pathways in LPS-stimulated mouse macrophages. Modulates intracellular Ca(2+) signaling in human PMA/ionomycin-triggered T-cells. Interferes with the activation of the MAPK, NF-kappa-B and NFATc1 pathways in human PMA/ionomycin-triggered T-cells. Reduces proliferation of human PMA/ionomycin-triggered T-cells. Down-regulates secretion of cytokines, such as TNF-alpha/TNF and IL2, in human PMA/ionomycin-triggered T-cells. The sequence is that of Potassium channel toxin alpha-KTx 2.2 from Centruroides margaritatus (Central American bark Scorpion).